The primary structure comprises 268 residues: 3-deoxy-manno-octulosonate cytidylyltransferase (268 aa).

It belongs to the KdsB family.

The protein localises to the cytoplasm. The enzyme catalyses 3-deoxy-alpha-D-manno-oct-2-ulosonate + CTP = CMP-3-deoxy-beta-D-manno-octulosonate + diphosphate. Its pathway is nucleotide-sugar biosynthesis; CMP-3-deoxy-D-manno-octulosonate biosynthesis; CMP-3-deoxy-D-manno-octulosonate from 3-deoxy-D-manno-octulosonate and CTP: step 1/1. It functions in the pathway bacterial outer membrane biogenesis; lipopolysaccharide biosynthesis. In terms of biological role, activates KDO (a required 8-carbon sugar) for incorporation into bacterial lipopolysaccharide in Gram-negative bacteria. In Ralstonia pickettii (strain 12J), this protein is 3-deoxy-manno-octulosonate cytidylyltransferase.